Here is a 93-residue protein sequence, read N- to C-terminus: MKTLVLLSALFLLAFQVQADPIQNTDEETNTEVQPQEEDQAVSVSFGNPEGSDLQEESLRDLGCYCRKRGCTRRERINGTCRKGHLMYTLCCL.

Residues 1–19 (MKTLVLLSALFLLAFQVQA) form the signal peptide. The propeptide occupies 20-58 (DPIQNTDEETNTEVQPQEEDQAVSVSFGNPEGSDLQEES). Residues 24–55 (NTDEETNTEVQPQEEDQAVSVSFGNPEGSDLQ) are disordered. The segment covering 25–40 (TDEETNTEVQPQEEDQ) has biased composition (acidic residues). Intrachain disulfides connect cysteine 64–cysteine 92, cysteine 66–cysteine 81, and cysteine 71–cysteine 91.

This sequence belongs to the alpha-defensin family.

The protein localises to the secreted. May have microbicidal activities. The chain is Alpha-defensin 26 (Defa26) from Mus musculus (Mouse).